A 344-amino-acid polypeptide reads, in one-letter code: Holliday junction branch migration complex subunit RuvB (344 aa).

The segment at 1-185 (MSTSRSDALK…FGIDFRYDYY (185 aa)) is large ATPase domain (RuvB-L). ATP contacts are provided by residues Leu-24, Arg-25, Gly-66, Lys-69, Thr-70, Thr-71, 132–134 (EDY), Arg-175, Tyr-185, and Arg-222. Thr-70 is a Mg(2+) binding site. Positions 186 to 256 (TADLLQEITQ…IADRALNALD (71 aa)) are small ATPAse domain (RuvB-S). The interval 259–344 (EEGLDDMDAR…AADQDLFDQE (86 aa)) is head domain (RuvB-H). Residues Arg-314 and Arg-319 each coordinate DNA.

It belongs to the RuvB family. In terms of assembly, homohexamer. Forms an RuvA(8)-RuvB(12)-Holliday junction (HJ) complex. HJ DNA is sandwiched between 2 RuvA tetramers; dsDNA enters through RuvA and exits via RuvB. An RuvB hexamer assembles on each DNA strand where it exits the tetramer. Each RuvB hexamer is contacted by two RuvA subunits (via domain III) on 2 adjacent RuvB subunits; this complex drives branch migration. In the full resolvosome a probable DNA-RuvA(4)-RuvB(12)-RuvC(2) complex forms which resolves the HJ.

It is found in the cytoplasm. It carries out the reaction ATP + H2O = ADP + phosphate + H(+). Its function is as follows. The RuvA-RuvB-RuvC complex processes Holliday junction (HJ) DNA during genetic recombination and DNA repair, while the RuvA-RuvB complex plays an important role in the rescue of blocked DNA replication forks via replication fork reversal (RFR). RuvA specifically binds to HJ cruciform DNA, conferring on it an open structure. The RuvB hexamer acts as an ATP-dependent pump, pulling dsDNA into and through the RuvAB complex. RuvB forms 2 homohexamers on either side of HJ DNA bound by 1 or 2 RuvA tetramers; 4 subunits per hexamer contact DNA at a time. Coordinated motions by a converter formed by DNA-disengaged RuvB subunits stimulates ATP hydrolysis and nucleotide exchange. Immobilization of the converter enables RuvB to convert the ATP-contained energy into a lever motion, pulling 2 nucleotides of DNA out of the RuvA tetramer per ATP hydrolyzed, thus driving DNA branch migration. The RuvB motors rotate together with the DNA substrate, which together with the progressing nucleotide cycle form the mechanistic basis for DNA recombination by continuous HJ branch migration. Branch migration allows RuvC to scan DNA until it finds its consensus sequence, where it cleaves and resolves cruciform DNA. The polypeptide is Holliday junction branch migration complex subunit RuvB (Salinibacter ruber (strain DSM 13855 / M31)).